Here is a 130-residue protein sequence, read N- to C-terminus: Small ribosomal subunit protein uS9 (130 aa).

This sequence belongs to the universal ribosomal protein uS9 family.

The chain is Small ribosomal subunit protein uS9 from Paraburkholderia phytofirmans (strain DSM 17436 / LMG 22146 / PsJN) (Burkholderia phytofirmans).